The following is a 383-amino-acid chain: Chaperone protein DnaJ (383 aa).

In terms of domain architecture, J spans 5 to 70 (DYYELLGVSR…QKRAAYDRFG (66 aa)). The CR-type zinc-finger motif lies at 140–219 (GTKTEIRVPT…CSGAGTVPRE (80 aa)). Residues Cys-153, Cys-156, Cys-171, Cys-174, Cys-193, Cys-196, Cys-207, and Cys-210 each contribute to the Zn(2+) site. CXXCXGXG motif repeat units follow at residues 153 to 160 (CDACSGTG), 171 to 178 (CPTCGGAG), 193 to 200 (CPTCGGAG), and 207 to 214 (CRVCSGAG).

The protein belongs to the DnaJ family. As to quaternary structure, homodimer. The cofactor is Zn(2+).

It localises to the cytoplasm. In terms of biological role, participates actively in the response to hyperosmotic and heat shock by preventing the aggregation of stress-denatured proteins and by disaggregating proteins, also in an autonomous, DnaK-independent fashion. Unfolded proteins bind initially to DnaJ; upon interaction with the DnaJ-bound protein, DnaK hydrolyzes its bound ATP, resulting in the formation of a stable complex. GrpE releases ADP from DnaK; ATP binding to DnaK triggers the release of the substrate protein, thus completing the reaction cycle. Several rounds of ATP-dependent interactions between DnaJ, DnaK and GrpE are required for fully efficient folding. Also involved, together with DnaK and GrpE, in the DNA replication of plasmids through activation of initiation proteins. This Acidiphilium cryptum (strain JF-5) protein is Chaperone protein DnaJ.